The following is a 410-amino-acid chain: Argininosuccinate synthase (410 aa).

An ATP-binding site is contributed by 8–16 (AYSGGLDTS). Position 86 (Y86) interacts with L-citrulline. Residue G116 coordinates ATP. Residues T118, N122, and D123 each coordinate L-aspartate. N122 is a binding site for L-citrulline. Residues R126, S174, E259, and Y271 each contribute to the L-citrulline site.

This sequence belongs to the argininosuccinate synthase family. Type 1 subfamily. As to quaternary structure, homotetramer.

It localises to the cytoplasm. The catalysed reaction is L-citrulline + L-aspartate + ATP = 2-(N(omega)-L-arginino)succinate + AMP + diphosphate + H(+). It participates in amino-acid biosynthesis; L-arginine biosynthesis; L-arginine from L-ornithine and carbamoyl phosphate: step 2/3. This Leuconostoc citreum (strain KM20) protein is Argininosuccinate synthase.